A 356-amino-acid polypeptide reads, in one-letter code: Septin-2A (356 aa).

Positions 33-305 constitute a Septin-type G domain; it reads KGFEFTLMVV…ENFRSERLKK (273 aa). The segment at 43-50 is G1 motif; the sequence is GESGLGKS. Residues 43 to 50, T77, G103, 182 to 190, G240, and R255 each bind GTP; these read GESGLGKS and KADTLTLRE. The G3 motif stretch occupies residues 100–103; it reads DTPG. A G4 motif region spans residues 181-184; sequence AKAD. An important for dimerization region spans residues 259 to 269; the sequence is WGVVEVENTEH.

It belongs to the TRAFAC class TrmE-Era-EngA-EngB-Septin-like GTPase superfamily. Septin GTPase family. As to quaternary structure, septins polymerize into heterooligomeric protein complexes that form filaments, and associate with cellular membranes, actin filaments and microtubules. GTPase activity is required for filament formation. Can form heterooligomers with other family members and form filaments. Interacts with wdpcp.

It localises to the cytoplasm. The protein localises to the cytoskeleton. Its subcellular location is the spindle. It is found in the cleavage furrow. The protein resides in the midbody. It localises to the cell projection. The protein localises to the cilium membrane. Functionally, filament-forming cytoskeletal GTPase. Required for normal organization of the actin cytoskeleton. Plays a role in the biogenesis of polarized columnar-shaped epithelium. Required for the progression through mitosis through regulation of chromosome congression. During anaphase, may be required for chromosome segregation and spindle elongation. Probably plays a role in ciliogenesis and collective cell movements including convergent extension during gastrulation. In cilia, required for the integrity of the diffusion barrier at the base of the primary cilium that prevents diffusion of transmembrane proteins between the cilia and plasma membranes. Controls cell shape and not polarization of cells during convergent extension. This is Septin-2A (sept2-a) from Xenopus laevis (African clawed frog).